Here is a 118-residue protein sequence, read N- to C-terminus: Large ribosomal subunit protein bL19 (118 aa).

This sequence belongs to the bacterial ribosomal protein bL19 family.

This protein is located at the 30S-50S ribosomal subunit interface and may play a role in the structure and function of the aminoacyl-tRNA binding site. The polypeptide is Large ribosomal subunit protein bL19 (Campylobacter jejuni subsp. jejuni serotype O:2 (strain ATCC 700819 / NCTC 11168)).